Reading from the N-terminus, the 255-residue chain is Small ribosomal subunit protein eS1 (255 aa).

Positions methionine 1–lysine 18 are enriched in basic residues. The tract at residues methionine 1–aspartate 28 is disordered. Alanine 2 is subject to N-acetylalanine; partial. Positions arginine 19–aspartate 28 are enriched in basic and acidic residues.

The protein belongs to the eukaryotic ribosomal protein eS1 family. In terms of assembly, component of the small ribosomal subunit. Mature ribosomes consist of a small (40S) and a large (60S) subunit. The 40S subunit contains about 33 different proteins and 1 molecule of RNA (18S). The 60S subunit contains about 49 different proteins and 3 molecules of RNA (25S, 5.8S and 5S).

The protein localises to the cytoplasm. This is Small ribosomal subunit protein eS1 from Ajellomyces capsulatus (strain NAm1 / WU24) (Darling's disease fungus).